The sequence spans 656 residues: tRNA 5-methylaminomethyl-2-thiouridine biosynthesis bifunctional protein MnmC (656 aa).

The tract at residues 1 to 236 (MTDPLIPAVL…KRAMLVGHFA (236 aa)) is tRNA (mnm(5)s(2)U34)-methyltransferase. The segment at 260-656 (IGAGLAGCAV…LRALRQGAVS (397 aa)) is FAD-dependent cmnm(5)s(2)U34 oxidoreductase.

The protein in the N-terminal section; belongs to the methyltransferase superfamily. tRNA (mnm(5)s(2)U34)-methyltransferase family. It in the C-terminal section; belongs to the DAO family. It depends on FAD as a cofactor.

It is found in the cytoplasm. It carries out the reaction 5-aminomethyl-2-thiouridine(34) in tRNA + S-adenosyl-L-methionine = 5-methylaminomethyl-2-thiouridine(34) in tRNA + S-adenosyl-L-homocysteine + H(+). Functionally, catalyzes the last two steps in the biosynthesis of 5-methylaminomethyl-2-thiouridine (mnm(5)s(2)U) at the wobble position (U34) in tRNA. Catalyzes the FAD-dependent demodification of cmnm(5)s(2)U34 to nm(5)s(2)U34, followed by the transfer of a methyl group from S-adenosyl-L-methionine to nm(5)s(2)U34, to form mnm(5)s(2)U34. This chain is tRNA 5-methylaminomethyl-2-thiouridine biosynthesis bifunctional protein MnmC, found in Paraburkholderia phytofirmans (strain DSM 17436 / LMG 22146 / PsJN) (Burkholderia phytofirmans).